Here is a 440-residue protein sequence, read N- to C-terminus: NADH-quinone oxidoreductase subunit D 2 (440 aa).

This sequence belongs to the complex I 49 kDa subunit family. As to quaternary structure, NDH-1 is composed of 14 different subunits. Subunits NuoB, C, D, E, F, and G constitute the peripheral sector of the complex.

The protein localises to the cell membrane. It catalyses the reaction a quinone + NADH + 5 H(+)(in) = a quinol + NAD(+) + 4 H(+)(out). Its function is as follows. NDH-1 shuttles electrons from NADH, via FMN and iron-sulfur (Fe-S) centers, to quinones in the respiratory chain. The immediate electron acceptor for the enzyme in this species is believed to be a menaquinone. Couples the redox reaction to proton translocation (for every two electrons transferred, four hydrogen ions are translocated across the cytoplasmic membrane), and thus conserves the redox energy in a proton gradient. This is NADH-quinone oxidoreductase subunit D 2 from Streptomyces coelicolor (strain ATCC BAA-471 / A3(2) / M145).